The sequence spans 236 residues: MPGAAAAAAAAAAAMLPAQEAAKLYHTNYVRNSRAIGVLWAIFTICFAIVNVVCFIQPYWIGDGVDTPQAGYFGLFHYCIGNGFSRELTCRGSFTDFSTLPSGAFKAASFFIGLSMMLIIACIICFTLFFFCNTATVYKICAWMQLTSAACLVLGCMIFPDGWDSDEVKRMCGEKTDKYTLGACSVRWAYILAIIGILDALILSFLAFVLGNRQDSLMAEELKAENKVLLSQYSLE.

A run of 4 helical transmembrane segments spans residues 36-56, 110-130, 140-160, and 191-211; these read IGVL…VCFI, FFIG…TLFF, ICAW…MIFP, and ILAI…FVLG.

This sequence belongs to the LHFP family.

It localises to the membrane. In Homo sapiens (Human), this protein is LHFPL tetraspan subfamily member 3 protein.